The primary structure comprises 516 residues: Probable cytochrome P450 9f2 (516 aa).

Cys460 is a binding site for heme.

The protein belongs to the cytochrome P450 family. Heme is required as a cofactor.

Its subcellular location is the endoplasmic reticulum membrane. The protein resides in the microsome membrane. In terms of biological role, may be involved in the metabolism of insect hormones and in the breakdown of synthetic insecticides. This chain is Probable cytochrome P450 9f2 (Cyp9f2), found in Drosophila melanogaster (Fruit fly).